Here is a 349-residue protein sequence, read N- to C-terminus: tRNA pseudouridine synthase D (349 aa).

Position 27 (Phe27) interacts with substrate. Asp80 (nucleophile) is an active-site residue. Asn129 lines the substrate pocket. One can recognise a TRUD domain in the interval 155-303 (GVPNYFGAQR…VEAARRAMLL (149 aa)). Residue Phe329 coordinates substrate.

The protein belongs to the pseudouridine synthase TruD family.

The enzyme catalyses uridine(13) in tRNA = pseudouridine(13) in tRNA. Functionally, responsible for synthesis of pseudouridine from uracil-13 in transfer RNAs. This is tRNA pseudouridine synthase D from Klebsiella pneumoniae (strain 342).